A 208-amino-acid polypeptide reads, in one-letter code: Outer-membrane lipoprotein carrier protein (208 aa).

Positions 1–21 (MKKLNTLLLVLGSLVATPSFA) are cleaved as a signal peptide. Residues 188 to 208 (KSTFEFTPPEGVEIDDQSNGE) are disordered. Acidic residues predominate over residues 199–208 (VEIDDQSNGE).

The protein belongs to the LolA family. In terms of assembly, monomer.

Its subcellular location is the periplasm. In terms of biological role, participates in the translocation of lipoproteins from the inner membrane to the outer membrane. Only forms a complex with a lipoprotein if the residue after the N-terminal Cys is not an aspartate (The Asp acts as a targeting signal to indicate that the lipoprotein should stay in the inner membrane). This is Outer-membrane lipoprotein carrier protein from Pseudoalteromonas translucida (strain TAC 125).